Reading from the N-terminus, the 363-residue chain is NAD(P)H-quinone oxidoreductase subunit 1, chloroplastic (363 aa).

The next 6 membrane-spanning stretches (helical) occupy residues 30–50 (LVPILTLVLGITIGVLVIVWL), 98–118 (FSIGPAIAVISILLSFSVIPF), 129–149 (IGIFLWIAISSIAPVGLLMSG), 248–268 (YSGIKFGLFYVASYLNLLLSS), 300–320 (IIGTTIGIFITLAKTYLFLFI), and 343–363 (FLLPISLGNLLLTTSFQLLSL).

It belongs to the complex I subunit 1 family. In terms of assembly, NDH is composed of at least 16 different subunits, 5 of which are encoded in the nucleus.

Its subcellular location is the plastid. It localises to the chloroplast thylakoid membrane. It carries out the reaction a plastoquinone + NADH + (n+1) H(+)(in) = a plastoquinol + NAD(+) + n H(+)(out). It catalyses the reaction a plastoquinone + NADPH + (n+1) H(+)(in) = a plastoquinol + NADP(+) + n H(+)(out). NDH shuttles electrons from NAD(P)H:plastoquinone, via FMN and iron-sulfur (Fe-S) centers, to quinones in the photosynthetic chain and possibly in a chloroplast respiratory chain. The immediate electron acceptor for the enzyme in this species is believed to be plastoquinone. Couples the redox reaction to proton translocation, and thus conserves the redox energy in a proton gradient. This Gossypium barbadense (Sea Island cotton) protein is NAD(P)H-quinone oxidoreductase subunit 1, chloroplastic.